Reading from the N-terminus, the 246-residue chain is MISILVTGISGRMGQAIQEAVTQNPDTCVGSTHDQGQELYPALAKCDVAIDFSHHAFTSTLLAEAVANNKPLVIGTTGHTELERQEIVDAAASIPIVFASNYSVGVNALFWLTRKAAQILGGSCDIEVMEMHHRHKIDAPSGTARTLAEILSGAIDRNYEDSVVFGREGLVGPRPAKEIGMHSLRGGDVVGDHTVIFASDGERLELTHKASSRMTFASGAVRAALWLQGREPGLYTMEDVLGLSQL.

NAD(+) contacts are provided by residues 8–13, 75–77, and 99–102; these read GISGRM, GTT, and ASNY. The active-site Proton donor/acceptor is His132. His133 provides a ligand contact to (S)-2,3,4,5-tetrahydrodipicolinate. Lys136 functions as the Proton donor in the catalytic mechanism. 142 to 143 contacts (S)-2,3,4,5-tetrahydrodipicolinate; that stretch reads GT.

It belongs to the DapB family.

It localises to the cytoplasm. It carries out the reaction (S)-2,3,4,5-tetrahydrodipicolinate + NAD(+) + H2O = (2S,4S)-4-hydroxy-2,3,4,5-tetrahydrodipicolinate + NADH + H(+). It catalyses the reaction (S)-2,3,4,5-tetrahydrodipicolinate + NADP(+) + H2O = (2S,4S)-4-hydroxy-2,3,4,5-tetrahydrodipicolinate + NADPH + H(+). Its pathway is amino-acid biosynthesis; L-lysine biosynthesis via DAP pathway; (S)-tetrahydrodipicolinate from L-aspartate: step 4/4. Its function is as follows. Catalyzes the conversion of 4-hydroxy-tetrahydrodipicolinate (HTPA) to tetrahydrodipicolinate. This is 4-hydroxy-tetrahydrodipicolinate reductase from Akkermansia muciniphila (strain ATCC BAA-835 / DSM 22959 / JCM 33894 / BCRC 81048 / CCUG 64013 / CIP 107961 / Muc).